A 275-amino-acid polypeptide reads, in one-letter code: Putative methylglyoxal reductase DkgA (275 aa).

Tyrosine 51 serves as the catalytic Proton donor. Position 107 (histidine 107) interacts with substrate. 187 to 241 (SPLAQGGEGVFDQKVIRELADKYGKTPAQIVIRWHLDCGLVVIPKSVTPSRIAEN) serves as a coordination point for NADP(+).

This sequence belongs to the aldo/keto reductase family. Monomer.

It localises to the cytoplasm. The catalysed reaction is hydroxyacetone + NADP(+) = methylglyoxal + NADPH + H(+). Aldo-keto reductase that significantly contributes to cellular methylglyoxal detoxification by catalyzing the NADPH-dependent conversion of methylglyoxal to acetol. The polypeptide is Putative methylglyoxal reductase DkgA (Salmonella typhi).